Consider the following 465-residue polypeptide: ATP synthase subunit beta (465 aa).

152-159 (GGAGVGKT) provides a ligand contact to ATP.

This sequence belongs to the ATPase alpha/beta chains family. As to quaternary structure, F-type ATPases have 2 components, CF(1) - the catalytic core - and CF(0) - the membrane proton channel. CF(1) has five subunits: alpha(3), beta(3), gamma(1), delta(1), epsilon(1). CF(0) has three main subunits: a(1), b(2) and c(9-12). The alpha and beta chains form an alternating ring which encloses part of the gamma chain. CF(1) is attached to CF(0) by a central stalk formed by the gamma and epsilon chains, while a peripheral stalk is formed by the delta and b chains.

The protein localises to the cell inner membrane. The catalysed reaction is ATP + H2O + 4 H(+)(in) = ADP + phosphate + 5 H(+)(out). Its function is as follows. Produces ATP from ADP in the presence of a proton gradient across the membrane. The catalytic sites are hosted primarily by the beta subunits. This is ATP synthase subunit beta from Campylobacter curvus (strain 525.92).